The chain runs to 298 residues: Cobalt-precorrin-5B C(1)-methyltransferase (298 aa).

This sequence belongs to the CbiD family.

It carries out the reaction Co-precorrin-5B + S-adenosyl-L-methionine = Co-precorrin-6A + S-adenosyl-L-homocysteine. It participates in cofactor biosynthesis; adenosylcobalamin biosynthesis; cob(II)yrinate a,c-diamide from sirohydrochlorin (anaerobic route): step 6/10. In terms of biological role, catalyzes the methylation of C-1 in cobalt-precorrin-5B to form cobalt-precorrin-6A. This Archaeoglobus fulgidus (strain ATCC 49558 / DSM 4304 / JCM 9628 / NBRC 100126 / VC-16) protein is Cobalt-precorrin-5B C(1)-methyltransferase.